Reading from the N-terminus, the 923-residue chain is Mitochondrial 10-formyltetrahydrofolate dehydrogenase (923 aa).

Residues 1–19 (MLRRGSQALRRFSTGRVYF) constitute a mitochondrion; not cleaved transit peptide. The segment at 23-331 (LKLALIGQSL…PASQYFSTGE (309 aa)) is hydrolase domain. Ser31 is subject to Phosphoserine. Lys60 is modified (N6-succinyllysine). Residue 110–112 (QFI) coordinates (6R)-10-formyltetrahydrofolate. His128 serves as the catalytic Proton donor. Residue Asp164 coordinates (6R)-10-formyltetrahydrofolate. Positions 339-416 (AEEVKVAETI…GFIQKVVRKL (78 aa)) constitute a Carrier domain. The residue at position 375 (Ser375) is an O-(pantetheine 4'-phosphoryl)serine. An aldehyde dehydrogenase domain region spans residues 438 to 923 (MVKMPYQCFI…LKTKTVTLEY (486 aa)). NADP(+) contacts are provided by residues 592 to 594 (IPW) and 618 to 621 (KPAQ). Ser650 is subject to Phosphoserine. Residues 651–656 (GGIAGQ) and 671–672 (GS) each bind NADP(+). An N6-succinyllysine modification is found at Lys681. Residue Glu694 is the Proton acceptor of the active site. Position 694–695 (694–695 (EL)) interacts with NADP(+). The active-site Proton donor is the Cys728. Lys778 contributes to the NADP(+) binding site. Lys788 carries the post-translational modification N6-succinyllysine. 825-827 (ESF) is a binding site for NADP(+). An N6-acetyllysine modification is found at Lys903.

This sequence in the N-terminal section; belongs to the GART family. The protein in the C-terminal section; belongs to the aldehyde dehydrogenase family. ALDH1L subfamily. Post-translationally, phosphopantetheinylation at Ser-375 by AASDHPPT is required for the formyltetrahydrofolate dehydrogenase activity. Highly expressed in pancreas, heart, brain and skeletal muscle.

The protein localises to the mitochondrion. It carries out the reaction (6R)-10-formyltetrahydrofolate + NADP(+) + H2O = (6S)-5,6,7,8-tetrahydrofolate + CO2 + NADPH + H(+). Functionally, mitochondrial 10-formyltetrahydrofolate dehydrogenase that catalyzes the NADP(+)-dependent conversion of 10-formyltetrahydrofolate to tetrahydrofolate and carbon dioxide. The polypeptide is Mitochondrial 10-formyltetrahydrofolate dehydrogenase (Homo sapiens (Human)).